The following is a 105-amino-acid chain: Blood plasma apolipoprotein LAL1 (105 aa).

A signal peptide spans 1–21; sequence MKLHVAALATLAVVCILAAGS. A propeptide spanning residues 22-29 is cleaved from the precursor; the sequence is EAAPKAMS.

As to expression, plasma.

The protein resides in the secreted. This is Blood plasma apolipoprotein LAL1 from Petromyzon marinus (Sea lamprey).